The following is a 174-amino-acid chain: Ribosome maturation factor RimM (174 aa).

The PRC barrel domain maps to 98-171; it reads EDEYYFHEII…TIKIHIMEGL (74 aa).

It belongs to the RimM family. Binds ribosomal protein uS19.

It localises to the cytoplasm. In terms of biological role, an accessory protein needed during the final step in the assembly of 30S ribosomal subunit, possibly for assembly of the head region. Essential for efficient processing of 16S rRNA. May be needed both before and after RbfA during the maturation of 16S rRNA. It has affinity for free ribosomal 30S subunits but not for 70S ribosomes. The protein is Ribosome maturation factor RimM of Bacillus licheniformis (strain ATCC 14580 / DSM 13 / JCM 2505 / CCUG 7422 / NBRC 12200 / NCIMB 9375 / NCTC 10341 / NRRL NRS-1264 / Gibson 46).